The primary structure comprises 439 residues: 23S rRNA (uracil(1939)-C(5))-methyltransferase RlmD (439 aa).

Positions 5-63 (RKLEHKTYKLNIESFSHEGRGIAHFEDKIIFVSDALPGELVIANRTFSCAKFEEADAKE) constitute a TRAM domain. [4Fe-4S] cluster contacts are provided by Cys-76, Cys-82, Cys-85, and Cys-164. S-adenosyl-L-methionine-binding residues include Gln-271, Phe-300, Asn-305, Glu-321, Asp-348, and Asp-370. Cys-396 functions as the Nucleophile in the catalytic mechanism.

It belongs to the class I-like SAM-binding methyltransferase superfamily. RNA M5U methyltransferase family. RlmD subfamily.

The catalysed reaction is uridine(1939) in 23S rRNA + S-adenosyl-L-methionine = 5-methyluridine(1939) in 23S rRNA + S-adenosyl-L-homocysteine + H(+). Catalyzes the formation of 5-methyl-uridine at position 1939 (m5U1939) in 23S rRNA. The sequence is that of 23S rRNA (uracil(1939)-C(5))-methyltransferase RlmD from Vesicomyosocius okutanii subsp. Calyptogena okutanii (strain HA).